The following is a 346-amino-acid chain: Short-wave-sensitive opsin 1 (346 aa).

Residues 1-31 (MSGEDEFYLFQNISSVGPWDGPQYHIAPVWA) are Extracellular-facing. The N-linked (GlcNAc...) asparagine glycan is linked to Asn12. The helical transmembrane segment at 32–56 (FHLQAAFMGFVFFAGTPLNATVLVA) threads the bilayer. Residues 57 to 68 (TLHYKKLRQPLN) lie on the Cytoplasmic side of the membrane. Residues 69 to 94 (YILVNVSLGGFLFCIFSVFTVFIASC) traverse the membrane as a helical segment. Residues 95-108 (HGYFLFGRHVCALE) are Extracellular-facing. Cys105 and Cys182 are joined by a disulfide. Residues 109-128 (AFLGSVAGLVTGWSLAFLAF) form a helical membrane-spanning segment. The Cytoplasmic portion of the chain corresponds to 129-147 (ERYLVICKPFGNIRFNSKH). Residues 148 to 171 (ALTVVLITWTIGIGVSIPPFFGWS) form a helical membrane-spanning segment. At 172-197 (RFIPEGLQCSCGPDWYTVGTKYRSEH) the chain is on the extracellular side. A helical membrane pass occupies residues 198 to 225 (YTWFLFIFCFIIPLSLICFSYFQLLRTL). Residues 226–247 (RAVAAQQQESATTQKAEREVSH) are Cytoplasmic-facing. A helical transmembrane segment spans residues 248–271 (MVVVMVGSFCLCYVPYAALAMYMV). Residues 272–279 (NNRNHGLY) lie on the Extracellular side of the membrane. The chain crosses the membrane as a helical span at residues 280–304 (LRLVTIPAFFSKSSCVYNPIIYCFM). Lys291 bears the N6-(retinylidene)lysine mark. The Cytoplasmic portion of the chain corresponds to 305–346 (NKQFRACILEMVCRKPMTDESDMSGSQKTEVSTVSSSKVGPH). The disordered stretch occupies residues 322–346 (TDESDMSGSQKTEVSTVSSSKVGPH). Over residues 330–346 (SQKTEVSTVSSSKVGPH) the composition is skewed to low complexity.

This sequence belongs to the G-protein coupled receptor 1 family. Opsin subfamily. Post-translationally, phosphorylated on some or all of the serine and threonine residues present in the C-terminal region. As to expression, expressed in cone photoreceptor cells.

Its subcellular location is the cell membrane. The protein localises to the photoreceptor inner segment. The protein resides in the cell projection. It is found in the cilium. It localises to the photoreceptor outer segment. Its subcellular location is the cytoplasm. The protein localises to the perinuclear region. Visual pigments are the light-absorbing molecules that mediate vision. They consist of an apoprotein, opsin, covalently linked to cis-retinal. Required for the maintenance of cone outer segment organization in the ventral retina, but not essential for the maintenance of functioning cone photoreceptors. Involved in ensuring correct abundance and localization of retinal membrane proteins. May increase spectral sensitivity in dim light. This Rattus norvegicus (Rat) protein is Short-wave-sensitive opsin 1 (Opn1sw).